Here is a 181-residue protein sequence, read N- to C-terminus: Photosystem I assembly protein Ycf4 (181 aa).

Transmembrane regions (helical) follow at residues 19–41 (YAWC…GSYF) and 61–83 (IVMM…SIFT).

The protein belongs to the Ycf4 family.

The protein resides in the plastid. Its subcellular location is the chloroplast thylakoid membrane. In terms of biological role, seems to be required for the assembly of the photosystem I complex. The sequence is that of Photosystem I assembly protein Ycf4 from Guillardia theta (Cryptophyte).